We begin with the raw amino-acid sequence, 258 residues long: Proteasome subunit alpha type-3 (258 aa).

Residues K100, K199, and K231 each participate in a glycyl lysine isopeptide (Lys-Gly) (interchain with G-Cter in ubiquitin) cross-link.

It belongs to the peptidase T1A family. As to quaternary structure, the 26S proteasome consists of a 20S proteasome core and two 19S regulatory subunits. The 20S proteasome core is composed of 28 subunits that are arranged in four stacked rings, resulting in a barrel-shaped structure. The two end rings are each formed by seven alpha subunits, and the two central rings are each formed by seven beta subunits. The catalytic chamber with the active sites is on the inside of the barrel.

It is found in the cytoplasm. The protein resides in the nucleus. In terms of biological role, the proteasome degrades poly-ubiquitinated proteins in the cytoplasm and in the nucleus. It is essential for the regulated turnover of proteins and for the removal of misfolded proteins. The proteasome is a multicatalytic proteinase complex that is characterized by its ability to cleave peptides with Arg, Phe, Tyr, Leu, and Glu adjacent to the leaving group at neutral or slightly basic pH. It has an ATP-dependent proteolytic activity. The protein is Proteasome subunit alpha type-3 (PRE9) of Saccharomyces cerevisiae (strain ATCC 204508 / S288c) (Baker's yeast).